The following is a 354-amino-acid chain: tRNA-specific 2-thiouridylase MnmA (354 aa).

ATP-binding positions include 6 to 13 (LLSGGVDS) and L33. C100 serves as the catalytic Nucleophile. C100 and C195 form a disulfide bridge. An ATP-binding site is contributed by G123. The interval 145–147 (KDQ) is interaction with tRNA. The active-site Cysteine persulfide intermediate is the C195.

The protein belongs to the MnmA/TRMU family.

Its subcellular location is the cytoplasm. It carries out the reaction S-sulfanyl-L-cysteinyl-[protein] + uridine(34) in tRNA + AH2 + ATP = 2-thiouridine(34) in tRNA + L-cysteinyl-[protein] + A + AMP + diphosphate + H(+). Catalyzes the 2-thiolation of uridine at the wobble position (U34) of tRNA, leading to the formation of s(2)U34. The protein is tRNA-specific 2-thiouridylase MnmA of Borrelia turicatae (strain 91E135).